A 331-amino-acid polypeptide reads, in one-letter code: Vitamin B12 import system permease protein BtuC (331 aa).

9 helical membrane-spanning segments follow: residues 18–38 (WLFG…CAGE), 64–84 (LAVL…QALF), 91–111 (PGLL…VLLG), 114–134 (VLPG…ITFI), 149–169 (LLAG…AVYF), 194–214 (LWLM…SQPL), 243–263 (GWMV…GLVI), 277–297 (VLLP…DIIA), and 305–325 (ELPI…WLLL).

Belongs to the binding-protein-dependent transport system permease family. FecCD subfamily. As to quaternary structure, the complex is composed of two ATP-binding proteins (BtuD), two transmembrane proteins (BtuC) and a solute-binding protein (BtuF).

Its subcellular location is the cell inner membrane. Its function is as follows. Part of the ABC transporter complex BtuCDF involved in vitamin B12 import. Involved in the translocation of the substrate across the membrane. The sequence is that of Vitamin B12 import system permease protein BtuC from Klebsiella pneumoniae subsp. pneumoniae (strain ATCC 700721 / MGH 78578).